The chain runs to 208 residues: Uracil phosphoribosyltransferase (208 aa).

Residues Arg78, Arg103, and 130–138 (DPMLATGGS) contribute to the 5-phospho-alpha-D-ribose 1-diphosphate site. Residues Ile193 and 198 to 200 (GDA) contribute to the uracil site. Position 199 (Asp199) interacts with 5-phospho-alpha-D-ribose 1-diphosphate.

It belongs to the UPRTase family. Mg(2+) serves as cofactor.

It catalyses the reaction UMP + diphosphate = 5-phospho-alpha-D-ribose 1-diphosphate + uracil. The protein operates within pyrimidine metabolism; UMP biosynthesis via salvage pathway; UMP from uracil: step 1/1. Its activity is regulated as follows. Allosterically activated by GTP. Its function is as follows. Catalyzes the conversion of uracil and 5-phospho-alpha-D-ribose 1-diphosphate (PRPP) to UMP and diphosphate. This chain is Uracil phosphoribosyltransferase, found in Shewanella denitrificans (strain OS217 / ATCC BAA-1090 / DSM 15013).